Reading from the N-terminus, the 278-residue chain is Bicarbonate transport ATP-binding protein CmpD (278 aa).

One can recognise an ABC transporter domain in the interval 21-254; it reads LIVENVSKIY…RPRDRERIME (234 aa). 57 to 64 is a binding site for ATP; it reads GHSGCGKS.

Belongs to the ABC transporter superfamily. Nitrate/nitrite/cyanate uptake transporter (NitT) (TC 3.A.1.16) family. As to quaternary structure, the complex is composed of two ATP-binding proteins (CmpC and CmpD), a transmembrane protein (CmpB) and a solute-binding protein (CmpA).

It is found in the cell inner membrane. In terms of biological role, part of the ABC transporter complex CmpABCD involved in bicarbonate transport. Responsible for energy coupling to the transport system. The protein is Bicarbonate transport ATP-binding protein CmpD (cmpD) of Synechococcus elongatus (strain ATCC 33912 / PCC 7942 / FACHB-805) (Anacystis nidulans R2).